Reading from the N-terminus, the 379-residue chain is MKIATLAVVSAFAATAIAGPIRPDGVGNDKFLIELGPGETQWVTKQQKHEMRAYINSIYKAGQGFVDITDEFGTDFTTAEVVPANYPKSALHAAVVNPMIAGLSKENLMRDLNTLVKFNNRYYESPTGVESATWVFNEVQKIIQASGVKGAKVEKFTNKFKQFNVIATIPGASKNTVIVGAHQDSINQKDPMKGRAPGADDNGSGTVVVLEAFRNVLKSKAIQAANATNTLEFHWYAGEEGGLLGSNNIFKKYKADGRKVKAMLNQDLTGFTKKGNPEQFGLITDNTNAELNEFCKTIVAKYAALKIVEAKCGYACSDHASAHRNGFPSSFIAETNFRNTNPYLHTADDVIANLDFNHMLEHAKVVVGFMGELAMTPNL.

A signal peptide spans 1–18 (MKIATLAVVSAFAATAIA). Residues histidine 182 and aspartate 201 each coordinate Zn(2+). Residues asparagine 202 and asparagine 226 are each glycosylated (N-linked (GlcNAc...) asparagine). Zn(2+) contacts are provided by glutamate 240 and aspartate 267. Cysteine 312 and cysteine 316 are oxidised to a cystine. Residue histidine 345 coordinates Zn(2+).

It belongs to the peptidase M28 family. M28E subfamily. In terms of assembly, monomer. It depends on Zn(2+) as a cofactor.

The protein localises to the secreted. Its function is as follows. Probable extracellular aminopeptidase which contributes to pathogenicity. The polypeptide is Probable leucine aminopeptidase TRV_05286 (Trichophyton verrucosum (strain HKI 0517)).